Consider the following 218-residue polypeptide: Small ribosomal subunit protein uS3 (218 aa).

Residues 38-106 (LRNDLKKKLM…PVHLNIEEVK (69 aa)) form the KH type-2 domain.

The protein belongs to the universal ribosomal protein uS3 family. As to quaternary structure, part of the 30S ribosomal subunit. Forms a tight complex with proteins S10 and S14.

Functionally, binds the lower part of the 30S subunit head. Binds mRNA in the 70S ribosome, positioning it for translation. This is Small ribosomal subunit protein uS3 from Legionella pneumophila (strain Paris).